An 81-amino-acid polypeptide reads, in one-letter code: Neurotoxin LmNaTx11.1 (81 aa).

The N-terminal stretch at 1-18 (MKIVIIFFIAMMAVGVYS) is a signal peptide. The LCN-type CS-alpha/beta domain maps to 19 to 80 (KDGYLVKKNG…PTYPSSKTCS (62 aa)). Disulfide bonds link Cys-29–Cys-79, Cys-33–Cys-56, Cys-42–Cys-61, and Cys-46–Cys-63.

This sequence belongs to the long (4 C-C) scorpion toxin superfamily. Sodium channel inhibitor family. Beta subfamily. Expressed by the venom gland.

It is found in the secreted. Functionally, binds voltage-independently at site-4 of sodium channels (Nav) and shift the voltage of activation toward more negative potentials thereby affecting sodium channel activation and promoting spontaneous and repetitive firing. This chain is Neurotoxin LmNaTx11.1, found in Lychas mucronatus (Chinese swimming scorpion).